A 218-amino-acid chain; its full sequence is GTP cyclohydrolase 1 (218 aa).

Positions 109, 112, and 180 each coordinate Zn(2+).

Belongs to the GTP cyclohydrolase I family. As to quaternary structure, toroid-shaped homodecamer, composed of two pentamers of five dimers.

It catalyses the reaction GTP + H2O = 7,8-dihydroneopterin 3'-triphosphate + formate + H(+). The protein operates within cofactor biosynthesis; 7,8-dihydroneopterin triphosphate biosynthesis; 7,8-dihydroneopterin triphosphate from GTP: step 1/1. The chain is GTP cyclohydrolase 1 from Histophilus somni (strain 129Pt) (Haemophilus somnus).